The following is a 352-amino-acid chain: 3'(2'),5'-bisphosphate nucleotidase (352 aa).

Asp45 functions as the Proton acceptor in the catalytic mechanism. Mg(2+) contacts are provided by Glu68, Asp133, Ile135, and Asp136. Thr138 serves as the catalytic Proton acceptor. Adenosine 3',5'-bisphosphate-binding residues include Thr138, His240, Ser264, Lys267, Arg281, and Asp294. The AMP site is built by His240, Ser264, Lys267, Arg281, and Asp294. Asp294 contributes to the Mg(2+) binding site.

It belongs to the inositol monophosphatase superfamily. Mg(2+) is required as a cofactor.

It carries out the reaction 3'-phosphoadenylyl sulfate + H2O = adenosine 5'-phosphosulfate + phosphate. The enzyme catalyses adenosine 3',5'-bisphosphate + H2O = AMP + phosphate. The catalysed reaction is adenosine 2',5'-bisphosphate + H2O = AMP + phosphate. Functionally, phosphatase that converts adenosine 3'-phosphate 5'-phosphosulfate (PAPS) to adenosine 5'-phosphosulfate (APS) and 3'(2')-phosphoadenosine 5'-phosphate (PAP) to AMP. May regulate the flux of sulfur in the sulfur-activation pathway by converting PAPS to APS. Involved in osmoadaptation. The chain is 3'(2'),5'-bisphosphate nucleotidase from Emericella nidulans (strain FGSC A4 / ATCC 38163 / CBS 112.46 / NRRL 194 / M139) (Aspergillus nidulans).